A 426-amino-acid chain; its full sequence is uncharacterized protein (426 aa).

It to M.leprae L518_C2_147 and M.tuberculosis Rv1524.

This is an uncharacterized protein from Mycobacterium tuberculosis (strain CDC 1551 / Oshkosh).